A 212-amino-acid polypeptide reads, in one-letter code: Octanoyltransferase (212 aa).

A BPL/LPL catalytic domain is found at 33–212 (GTAPELVWLL…ATFPEVFGAD (180 aa)). Substrate is bound by residues 72-79 (RGGQYTYH), 144-146 (AIG), and 157-159 (GIA). The active-site Acyl-thioester intermediate is the cysteine 175.

It belongs to the LipB family.

It is found in the cytoplasm. It catalyses the reaction octanoyl-[ACP] + L-lysyl-[protein] = N(6)-octanoyl-L-lysyl-[protein] + holo-[ACP] + H(+). The protein operates within protein modification; protein lipoylation via endogenous pathway; protein N(6)-(lipoyl)lysine from octanoyl-[acyl-carrier-protein]: step 1/2. Functionally, catalyzes the transfer of endogenously produced octanoic acid from octanoyl-acyl-carrier-protein onto the lipoyl domains of lipoate-dependent enzymes. Lipoyl-ACP can also act as a substrate although octanoyl-ACP is likely to be the physiological substrate. In Paramagnetospirillum magneticum (strain ATCC 700264 / AMB-1) (Magnetospirillum magneticum), this protein is Octanoyltransferase.